Here is a 409-residue protein sequence, read N- to C-terminus: Elongation factor Tu (409 aa).

Residues 10-214 (KPHVNIGTIG…AVDSYIPDPE (205 aa)) enclose the tr-type G domain. Residues 19–26 (GHVDHGKT) form a G1 region. 19 to 26 (GHVDHGKT) is a GTP binding site. Mg(2+) is bound at residue threonine 26. Residues 60–64 (GITIN) form a G2 region. The segment at 81–84 (DCPG) is G3. Residues 81-85 (DCPGH) and 136-139 (NKED) each bind GTP. The interval 136-139 (NKED) is G4. Residues 174–176 (SGL) form a G5 region.

Monomer.

It is found in the cytoplasm. The catalysed reaction is GTP + H2O = GDP + phosphate + H(+). In terms of biological role, GTP hydrolase that promotes the GTP-dependent binding of aminoacyl-tRNA to the A-site of ribosomes during protein biosynthesis. This Nostoc sp. (strain PCC 7120 / SAG 25.82 / UTEX 2576) protein is Elongation factor Tu.